We begin with the raw amino-acid sequence, 395 residues long: Succinyl-diaminopimelate desuccinylase (395 aa).

His-74 serves as a coordination point for Zn(2+). Asp-76 is a catalytic residue. Asp-107 is a Zn(2+) binding site. The active-site Proton acceptor is Glu-141. Glu-142, Glu-170, and His-368 together coordinate Zn(2+).

It belongs to the peptidase M20A family. DapE subfamily. In terms of assembly, homodimer. Zn(2+) is required as a cofactor. It depends on Co(2+) as a cofactor.

The catalysed reaction is N-succinyl-(2S,6S)-2,6-diaminopimelate + H2O = (2S,6S)-2,6-diaminopimelate + succinate. Its pathway is amino-acid biosynthesis; L-lysine biosynthesis via DAP pathway; LL-2,6-diaminopimelate from (S)-tetrahydrodipicolinate (succinylase route): step 3/3. In terms of biological role, catalyzes the hydrolysis of N-succinyl-L,L-diaminopimelic acid (SDAP), forming succinate and LL-2,6-diaminopimelate (DAP), an intermediate involved in the bacterial biosynthesis of lysine and meso-diaminopimelic acid, an essential component of bacterial cell walls. The chain is Succinyl-diaminopimelate desuccinylase from Brucella melitensis biotype 1 (strain ATCC 23456 / CCUG 17765 / NCTC 10094 / 16M).